Here is an 876-residue protein sequence, read N- to C-terminus: Valine--tRNA ligase (876 aa).

The 'HIGH' region signature appears at 43 to 53 (PNVTGVLHMGH). Residues 532-536 (KMSKS) carry the 'KMSKS' region motif. Lys-535 contacts ATP. 2 coiled-coil regions span residues 805-826 (GNMIDVDAEIARMEAELKHKEG) and 853-875 (RKKQADAESIIQSLKESIASLKN).

Belongs to the class-I aminoacyl-tRNA synthetase family. ValS type 1 subfamily. As to quaternary structure, monomer.

The protein resides in the cytoplasm. The enzyme catalyses tRNA(Val) + L-valine + ATP = L-valyl-tRNA(Val) + AMP + diphosphate. Functionally, catalyzes the attachment of valine to tRNA(Val). As ValRS can inadvertently accommodate and process structurally similar amino acids such as threonine, to avoid such errors, it has a 'posttransfer' editing activity that hydrolyzes mischarged Thr-tRNA(Val) in a tRNA-dependent manner. The chain is Valine--tRNA ligase from Bacteroides fragilis (strain ATCC 25285 / DSM 2151 / CCUG 4856 / JCM 11019 / LMG 10263 / NCTC 9343 / Onslow / VPI 2553 / EN-2).